Here is a 180-residue protein sequence, read N- to C-terminus: Hypoxanthine-guanine phosphoribosyltransferase (180 aa).

GMP is bound by residues Lys40, 99–107, Lys131, and Asp159; that span reads EDIVDSGLT. The active-site Proton acceptor is the Asp103. Asp159 is a Mg(2+) binding site.

Belongs to the purine/pyrimidine phosphoribosyltransferase family. The cofactor is Mg(2+).

The protein localises to the cytoplasm. The enzyme catalyses IMP + diphosphate = hypoxanthine + 5-phospho-alpha-D-ribose 1-diphosphate. It catalyses the reaction GMP + diphosphate = guanine + 5-phospho-alpha-D-ribose 1-diphosphate. The protein operates within purine metabolism; IMP biosynthesis via salvage pathway; IMP from hypoxanthine: step 1/1. In terms of biological role, converts guanine to guanosine monophosphate, and hypoxanthine to inosine monophosphate. Transfers the 5-phosphoribosyl group from 5-phosphoribosylpyrophosphate onto the purine. Plays a central role in the generation of purine nucleotides through the purine salvage pathway. This Dictyostelium discoideum (Social amoeba) protein is Hypoxanthine-guanine phosphoribosyltransferase (hprT).